Consider the following 740-residue polypeptide: Ribosomal protein S6 kinase alpha-6 (740 aa).

One can recognise a Protein kinase 1 domain in the interval 67-326 (FELLKVLGQG…VEEIKRHTFF (260 aa)). ATP-binding positions include 73-81 (LGQGSFGKV) and K99. Catalysis depends on D192, which acts as the Proton acceptor. In terms of domain architecture, AGC-kinase C-terminal spans 327–396 (STIDWNKLYR…VAPVSLEESK (70 aa)). The Protein kinase 2 domain occupies 420-677 (YELKEDIGVG…AEQVLKHSWI (258 aa)). ATP contacts are provided by residues 426–434 (IGVGSYSIC) and K449. D537 serves as the catalytic Proton acceptor.

The protein belongs to the protein kinase superfamily. AGC Ser/Thr protein kinase family. S6 kinase subfamily. Forms a complex with either ERK1 or ERK2 in quiescent cells. Transiently dissociates following mitogenic stimulation. Requires Mg(2+) as cofactor.

The catalysed reaction is L-seryl-[protein] + ATP = O-phospho-L-seryl-[protein] + ADP + H(+). It catalyses the reaction L-threonyl-[protein] + ATP = O-phospho-L-threonyl-[protein] + ADP + H(+). Its activity is regulated as follows. Activated by multiple phosphorylations on threonine and serine residues. Functionally, serine/threonine kinase that may play a role in mediating the growth-factor and stress induced activation of the transcription factor CREB. The chain is Ribosomal protein S6 kinase alpha-6 (rps6ka6) from Danio rerio (Zebrafish).